Here is a 354-residue protein sequence, read N- to C-terminus: Glutamine synthetase cytosolic isozyme 1-3 (354 aa).

Ser-2 is modified (N-acetylserine). Phosphoserine is present on residues Ser-2 and Ser-48. In terms of domain architecture, GS beta-grasp spans Ile-19–Gly-99. One can recognise a GS catalytic domain in the interval Lys-106–Gly-354.

Belongs to the glutamine synthetase family. Homooctamer. As to expression, expressed in the pericycle in the region of mature root.

It is found in the cytoplasm. It catalyses the reaction L-glutamate + NH4(+) + ATP = L-glutamine + ADP + phosphate + H(+). Functionally, low-affinity glutamine synthetase. May contribute to the homeostatic control of glutamine synthesis in roots. This is Glutamine synthetase cytosolic isozyme 1-3 (GLN1-3) from Arabidopsis thaliana (Mouse-ear cress).